Consider the following 600-residue polypeptide: Glutamine--fructose-6-phosphate aminotransferase [isomerizing] (600 aa).

The Nucleophile; for GATase activity role is filled by Cys-2. Residues Cys-2–Asn-217 enclose the Glutamine amidotransferase type-2 domain. 2 SIS domains span residues Ile-283–Leu-422 and Leu-452–Pro-590. The active-site For Fru-6P isomerization activity is the Lys-595.

As to quaternary structure, homodimer.

Its subcellular location is the cytoplasm. It catalyses the reaction D-fructose 6-phosphate + L-glutamine = D-glucosamine 6-phosphate + L-glutamate. Its function is as follows. Catalyzes the first step in hexosamine metabolism, converting fructose-6P into glucosamine-6P using glutamine as a nitrogen source. In Oceanobacillus iheyensis (strain DSM 14371 / CIP 107618 / JCM 11309 / KCTC 3954 / HTE831), this protein is Glutamine--fructose-6-phosphate aminotransferase [isomerizing].